A 134-amino-acid chain; its full sequence is MTISLGFVVAEFNRDLTYQMELLGREHAEFLGATVKETILVPGVFDMPLAIKKLCQREDIDAVVTIGSVIEGETDHDQVVMQHAARKIMDLSLEFNKPVTLGIPGPGMTRMAAHERVDYAKRAVEAAVKLVRRL.

Residues F12, 44–46 (VFD), and 68–70 (SVI) each bind 5-amino-6-(D-ribitylamino)uracil. 73–74 (ET) serves as a coordination point for (2S)-2-hydroxy-3-oxobutyl phosphate. Residue H76 is the Proton donor of the active site. L101 serves as a coordination point for 5-amino-6-(D-ribitylamino)uracil. R116 contributes to the (2S)-2-hydroxy-3-oxobutyl phosphate binding site.

The protein belongs to the DMRL synthase family.

It carries out the reaction (2S)-2-hydroxy-3-oxobutyl phosphate + 5-amino-6-(D-ribitylamino)uracil = 6,7-dimethyl-8-(1-D-ribityl)lumazine + phosphate + 2 H2O + H(+). Its pathway is cofactor biosynthesis; riboflavin biosynthesis; riboflavin from 2-hydroxy-3-oxobutyl phosphate and 5-amino-6-(D-ribitylamino)uracil: step 1/2. In terms of biological role, catalyzes the formation of 6,7-dimethyl-8-ribityllumazine by condensation of 5-amino-6-(D-ribitylamino)uracil with 3,4-dihydroxy-2-butanone 4-phosphate. This is the penultimate step in the biosynthesis of riboflavin. This is 6,7-dimethyl-8-ribityllumazine synthase from Methanosarcina mazei (strain ATCC BAA-159 / DSM 3647 / Goe1 / Go1 / JCM 11833 / OCM 88) (Methanosarcina frisia).